The chain runs to 135 residues: Small ribosomal subunit protein uS11 (135 aa).

It belongs to the universal ribosomal protein uS11 family. In terms of assembly, part of the 30S ribosomal subunit. Interacts with proteins S7 and S18. Binds to IF-3.

Its function is as follows. Located on the platform of the 30S subunit, it bridges several disparate RNA helices of the 16S rRNA. Forms part of the Shine-Dalgarno cleft in the 70S ribosome. The protein is Small ribosomal subunit protein uS11 of Corynebacterium urealyticum (strain ATCC 43042 / DSM 7109).